We begin with the raw amino-acid sequence, 695 residues long: Polyribonucleotide nucleotidyltransferase (695 aa).

2 residues coordinate Mg(2+): aspartate 486 and aspartate 492. In terms of domain architecture, KH spans 553–612 (PRIETMQINTSKIATVIGPGGKQIRQIIERSGAQVDINDDGVINIAASTQESINKAKELI). In terms of domain architecture, S1 motif spans 622 to 690 (GKVYNGRVTS…EKGQLKLSHK (69 aa)).

This sequence belongs to the polyribonucleotide nucleotidyltransferase family. Mg(2+) serves as cofactor.

It localises to the cytoplasm. The catalysed reaction is RNA(n+1) + phosphate = RNA(n) + a ribonucleoside 5'-diphosphate. In terms of biological role, involved in mRNA degradation. Catalyzes the phosphorolysis of single-stranded polyribonucleotides processively in the 3'- to 5'-direction. The chain is Polyribonucleotide nucleotidyltransferase from Chlamydia trachomatis serovar L2 (strain ATCC VR-902B / DSM 19102 / 434/Bu).